A 410-amino-acid chain; its full sequence is Phosphopentomutase (410 aa).

Positions 10, 309, 314, 350, 351, and 362 each coordinate Mn(2+).

This sequence belongs to the phosphopentomutase family. Requires Mn(2+) as cofactor.

It is found in the cytoplasm. It carries out the reaction 2-deoxy-alpha-D-ribose 1-phosphate = 2-deoxy-D-ribose 5-phosphate. The enzyme catalyses alpha-D-ribose 1-phosphate = D-ribose 5-phosphate. Its pathway is carbohydrate degradation; 2-deoxy-D-ribose 1-phosphate degradation; D-glyceraldehyde 3-phosphate and acetaldehyde from 2-deoxy-alpha-D-ribose 1-phosphate: step 1/2. Functionally, isomerase that catalyzes the conversion of deoxy-ribose 1-phosphate (dRib-1-P) and ribose 1-phosphate (Rib-1-P) to deoxy-ribose 5-phosphate (dRib-5-P) and ribose 5-phosphate (Rib-5-P), respectively. In Aliivibrio fischeri (strain ATCC 700601 / ES114) (Vibrio fischeri), this protein is Phosphopentomutase.